The following is a 550-amino-acid chain: Pectinesterase 2.2 (550 aa).

The N-linked (GlcNAc...) asparagine glycan is linked to Asn179. Positions 312 and 342 each coordinate substrate. An intrachain disulfide couples Cys331 to Cys358. Catalysis depends on Asp365, which acts as the Proton donor. Asp386 (nucleophile) is an active-site residue. The cysteines at positions 399 and 433 are disulfide-linked. 2 residues coordinate substrate: Arg454 and Trp456.

This sequence in the N-terminal section; belongs to the PMEI family. It in the C-terminal section; belongs to the pectinesterase family.

It localises to the secreted. Its subcellular location is the cell wall. It catalyses the reaction [(1-&gt;4)-alpha-D-galacturonosyl methyl ester](n) + n H2O = [(1-&gt;4)-alpha-D-galacturonosyl](n) + n methanol + n H(+). It participates in glycan metabolism; pectin degradation; 2-dehydro-3-deoxy-D-gluconate from pectin: step 1/5. Its function is as follows. Pectinesterase may play a role in cell wall metabolism during fruit growth and development prior to ripening and may be required for preparing cell walls for softening by polygalacturonase during fruit ripening. This chain is Pectinesterase 2.2 (PME2.2), found in Solanum lycopersicum (Tomato).